Here is a 284-residue protein sequence, read N- to C-terminus: Bifunctional protein FolD (284 aa).

NADP(+)-binding positions include 166–168 (GAS) and isoleucine 232.

It belongs to the tetrahydrofolate dehydrogenase/cyclohydrolase family. As to quaternary structure, homodimer.

The enzyme catalyses (6R)-5,10-methylene-5,6,7,8-tetrahydrofolate + NADP(+) = (6R)-5,10-methenyltetrahydrofolate + NADPH. The catalysed reaction is (6R)-5,10-methenyltetrahydrofolate + H2O = (6R)-10-formyltetrahydrofolate + H(+). The protein operates within one-carbon metabolism; tetrahydrofolate interconversion. Its function is as follows. Catalyzes the oxidation of 5,10-methylenetetrahydrofolate to 5,10-methenyltetrahydrofolate and then the hydrolysis of 5,10-methenyltetrahydrofolate to 10-formyltetrahydrofolate. The chain is Bifunctional protein FolD from Tolumonas auensis (strain DSM 9187 / NBRC 110442 / TA 4).